The following is a 62-amino-acid chain: MTCYNQQSSEAKTTTTCSGGVSSCYKKTWSDIRGTIIERGCGCPSVKKGIERICCRTDKCNN.

Residues 1 to 20 (MTCYNQQSSEAKTTTTCSGG) are disordered. 4 disulfides stabilise this stretch: cysteine 3–cysteine 24, cysteine 17–cysteine 41, cysteine 43–cysteine 54, and cysteine 55–cysteine 60.

It belongs to the three-finger toxin family. Short-chain subfamily. Type I alpha-neurotoxin sub-subfamily. As to expression, expressed by the venom gland.

Its subcellular location is the secreted. Binds to muscle nicotinic acetylcholine receptor (nAChR) and inhibit acetylcholine from binding to the receptor, thereby impairing neuromuscular transmission. This is Short neurotoxin 2 from Oxyuranus scutellatus scutellatus (Australian taipan).